We begin with the raw amino-acid sequence, 111 residues long: Nucleoid-associated protein PputW619_3586 (111 aa).

A disordered region spans residues 87 to 111 (EQSSQEKMGGMTAGMQLPPGFKMPF).

Belongs to the YbaB/EbfC family. Homodimer.

Its subcellular location is the cytoplasm. It localises to the nucleoid. In terms of biological role, binds to DNA and alters its conformation. May be involved in regulation of gene expression, nucleoid organization and DNA protection. The polypeptide is Nucleoid-associated protein PputW619_3586 (Pseudomonas putida (strain W619)).